Reading from the N-terminus, the 335-residue chain is DNA-directed RNA polymerase subunit alpha (335 aa).

Residues 1-233 are alpha N-terminal domain (alpha-NTD); the sequence is MMLNATEFLT…QQISIFVDLE (233 aa). The tract at residues 247-335 is alpha C-terminal domain (alpha-CTD); it reads VDPVLLRPVD…VDDRFSYRSR (89 aa).

It belongs to the RNA polymerase alpha chain family. Homodimer. The RNAP catalytic core consists of 2 alpha, 1 beta, 1 beta' and 1 omega subunit. When a sigma factor is associated with the core the holoenzyme is formed, which can initiate transcription.

It catalyses the reaction RNA(n) + a ribonucleoside 5'-triphosphate = RNA(n+1) + diphosphate. In terms of biological role, DNA-dependent RNA polymerase catalyzes the transcription of DNA into RNA using the four ribonucleoside triphosphates as substrates. The protein is DNA-directed RNA polymerase subunit alpha of Psychrobacter sp. (strain PRwf-1).